The sequence spans 563 residues: Alpha-humulene synthase (563 aa).

Mg(2+) is bound by residues Asp-316, Asp-320, Asp-461, and Glu-469. A DDXXD motif motif is present at residues 316–320; sequence DDIYD.

It belongs to the terpene synthase family. Tpsa subfamily. Requires Mg(2+) as cofactor. It depends on Mn(2+) as a cofactor. In terms of tissue distribution, expressed in trichomes, cones and young leaves.

The enzyme catalyses (2E,6E)-farnesyl diphosphate = alpha-humulene + diphosphate. The protein operates within sesquiterpene biosynthesis. It participates in secondary metabolite biosynthesis; terpenoid biosynthesis. Its function is as follows. Sesquiterpene synthase that catalyzes the formation of alpha-humulene. Can use farnesyl diphosphate (FPP) as substrate, but not geranyl diphosphate (GPP) or geranylgeranyl diphosphate (GGPP). This chain is Alpha-humulene synthase, found in Humulus lupulus (European hop).